The chain runs to 634 residues: Protein IcfG (634 aa).

The region spanning 306–361 (HHSTVPILDLTKASQAIAAGDLDYEININQGNRQDEIGILGNSFIYMKNQIKTLIA) is the HAMP domain. Residues 385-633 (PISLPDLQQW…DDITMIAVYR (249 aa)) form the PPM-type phosphatase domain.

Its function is as follows. Involved in cross-regulation of inorganic carbon and glucose metabolisms. The sequence is that of Protein IcfG (icfG) from Synechocystis sp. (strain ATCC 27184 / PCC 6803 / Kazusa).